The sequence spans 351 residues: Ion-translocating oxidoreductase complex subunit D (351 aa).

A run of 3 helical transmembrane segments spans residues 37 to 57 (YFFG…AILA), 88 to 108 (AIPP…AIVI), and 123 to 143 (PAMA…TTWL). Position 187 is an FMN phosphoryl threonine (Thr-187). 4 helical membrane-spanning segments follow: residues 214–234 (FAGL…LFLL), 241–261 (WHIP…FAVF), 270–290 (IFNL…TDPV), and 300–317 (LYYG…RSWG).

The protein belongs to the NqrB/RnfD family. The complex is composed of six subunits: RnfA, RnfB, RnfC, RnfD, RnfE and RnfG. FMN is required as a cofactor.

It is found in the cell inner membrane. Part of a membrane-bound complex that couples electron transfer with translocation of ions across the membrane. The chain is Ion-translocating oxidoreductase complex subunit D from Aliivibrio salmonicida (strain LFI1238) (Vibrio salmonicida (strain LFI1238)).